A 189-amino-acid polypeptide reads, in one-letter code: UPF0301 protein RrIowa_0061 (189 aa).

This sequence belongs to the UPF0301 (AlgH) family.

The protein is UPF0301 protein RrIowa_0061 of Rickettsia rickettsii (strain Iowa).